Consider the following 159-residue polypeptide: 17 kDa surface antigen (159 aa).

The first 19 residues, 1–19 (MKIISKIIVILLAASMLQA), serve as a signal peptide directing secretion. The N-palmitoyl cysteine moiety is linked to residue C20. Residue C20 is the site of S-diacylglycerol cysteine attachment.

This sequence belongs to the rickettsiale 17 kDa surface antigen family.

The protein resides in the cell outer membrane. This Rickettsia bellii protein is 17 kDa surface antigen (omp).